Consider the following 80-residue polypeptide: Cell division protein ZapB (80 aa).

A coiled-coil region spans residues 3–80; it reads FEVLEQLEAK…NLLGKMDDVE (78 aa).

The protein belongs to the ZapB family. As to quaternary structure, homodimer. The ends of the coiled-coil dimer bind to each other, forming polymers. Interacts with FtsZ.

It localises to the cytoplasm. Its function is as follows. Non-essential, abundant cell division factor that is required for proper Z-ring formation. It is recruited early to the divisome by direct interaction with FtsZ, stimulating Z-ring assembly and thereby promoting cell division earlier in the cell cycle. Its recruitment to the Z-ring requires functional FtsA or ZipA. In Vibrio atlanticus (strain LGP32) (Vibrio splendidus (strain Mel32)), this protein is Cell division protein ZapB.